Reading from the N-terminus, the 238-residue chain is 1-(5-phosphoribosyl)-5-[(5-phosphoribosylamino)methylideneamino] imidazole-4-carboxamide isomerase (238 aa).

The Proton acceptor role is filled by Asp-8. Asp-129 (proton donor) is an active-site residue.

Belongs to the HisA/HisF family.

It is found in the cytoplasm. The catalysed reaction is 1-(5-phospho-beta-D-ribosyl)-5-[(5-phospho-beta-D-ribosylamino)methylideneamino]imidazole-4-carboxamide = 5-[(5-phospho-1-deoxy-D-ribulos-1-ylimino)methylamino]-1-(5-phospho-beta-D-ribosyl)imidazole-4-carboxamide. It functions in the pathway amino-acid biosynthesis; L-histidine biosynthesis; L-histidine from 5-phospho-alpha-D-ribose 1-diphosphate: step 4/9. The sequence is that of 1-(5-phosphoribosyl)-5-[(5-phosphoribosylamino)methylideneamino] imidazole-4-carboxamide isomerase from Clostridium kluyveri (strain NBRC 12016).